Reading from the N-terminus, the 105-residue chain is Small ribosomal subunit protein uS10 (105 aa).

The protein belongs to the universal ribosomal protein uS10 family. As to quaternary structure, part of the 30S ribosomal subunit.

Its function is as follows. Involved in the binding of tRNA to the ribosomes. The polypeptide is Small ribosomal subunit protein uS10 (Rickettsia bellii (strain OSU 85-389)).